We begin with the raw amino-acid sequence, 173 residues long: Nuclear transcription factor Y subunit B-8 (173 aa).

A disordered region spans residues 1-30 (MAESQAKSPGGCGSHESGGDQSPRSLHVRE). Ala2 carries the N-acetylalanine modification. The DNA-binding element occupies 35–41 (LPIANIS). A subunit association domain (SAD) region spans residues 62–73 (VQECVSEFISFV). The disordered stretch occupies residues 123–173 (DTKGSAKGGDPNAKKDGQSSQNGQFSQLAHQGPYGNSQAQQHMMVPMPGTD). Residues 140 to 163 (QSSQNGQFSQLAHQGPYGNSQAQQ) show a composition bias toward polar residues.

Belongs to the NFYB/HAP3 subunit family. As to quaternary structure, heterotrimeric transcription factor composed of three components, NF-YA, NF-YB and NF-YC. NF-YB and NF-YC must interact and dimerize for NF-YA association and DNA binding. Expressed in flowers and mature rosettes.

The protein localises to the nucleus. Functionally, component of the NF-Y/HAP transcription factor complex. The NF-Y complex stimulates the transcription of various genes by recognizing and binding to a CCAAT motif in promoters. The protein is Nuclear transcription factor Y subunit B-8 (NFYB8) of Arabidopsis thaliana (Mouse-ear cress).